A 41-amino-acid chain; its full sequence is uncharacterized protein (41 aa).

Residues 10 to 32 (LIILAVPFMIKTSLKTNLIFFFL) form a helical membrane-spanning segment.

It is found in the cell inner membrane. This is an uncharacterized protein from Escherichia coli (strain K12).